Consider the following 249-residue polypeptide: Probable transcriptional regulatory protein HY04AAS1_0501 (249 aa).

It belongs to the TACO1 family.

Its subcellular location is the cytoplasm. The sequence is that of Probable transcriptional regulatory protein HY04AAS1_0501 from Hydrogenobaculum sp. (strain Y04AAS1).